A 178-amino-acid chain; its full sequence is Cytochrome b6-f complex iron-sulfur subunit (178 aa).

The chain crosses the membrane as a helical span at residues 20–42 (LLTFGSVTGVALGALYPVVNYFI). Residues 65–161 (ASGWLADHKE…VNVENDNVFV (97 aa)) enclose the Rieske domain. 4 residues coordinate [2Fe-2S] cluster: Cys107, His109, Cys125, and His128. The cysteines at positions 112 and 127 are disulfide-linked.

The protein belongs to the Rieske iron-sulfur protein family. As to quaternary structure, the 4 large subunits of the cytochrome b6-f complex are cytochrome b6, subunit IV (17 kDa polypeptide, PetD), cytochrome f and the Rieske protein, while the 4 small subunits are PetG, PetL, PetM and PetN. The complex functions as a dimer. The cofactor is [2Fe-2S] cluster.

It is found in the cellular thylakoid membrane. The catalysed reaction is 2 oxidized [plastocyanin] + a plastoquinol + 2 H(+)(in) = 2 reduced [plastocyanin] + a plastoquinone + 4 H(+)(out). Its function is as follows. Component of the cytochrome b6-f complex, which mediates electron transfer between photosystem II (PSII) and photosystem I (PSI), cyclic electron flow around PSI, and state transitions. This chain is Cytochrome b6-f complex iron-sulfur subunit, found in Synechococcus sp. (strain RCC307).